A 379-amino-acid polypeptide reads, in one-letter code: Probable tRNA sulfurtransferase (379 aa).

The region spanning 52-157 (DEFLDKLKFI…RHHAFVFCKI (106 aa)) is the THUMP domain. ATP is bound by residues 175–176 (LL), arginine 257, glycine 279, and glutamine 288.

This sequence belongs to the ThiI family.

It localises to the cytoplasm. The enzyme catalyses [ThiI sulfur-carrier protein]-S-sulfanyl-L-cysteine + a uridine in tRNA + 2 reduced [2Fe-2S]-[ferredoxin] + ATP + H(+) = [ThiI sulfur-carrier protein]-L-cysteine + a 4-thiouridine in tRNA + 2 oxidized [2Fe-2S]-[ferredoxin] + AMP + diphosphate. It catalyses the reaction [ThiS sulfur-carrier protein]-C-terminal Gly-Gly-AMP + S-sulfanyl-L-cysteinyl-[cysteine desulfurase] + AH2 = [ThiS sulfur-carrier protein]-C-terminal-Gly-aminoethanethioate + L-cysteinyl-[cysteine desulfurase] + A + AMP + 2 H(+). Its pathway is cofactor biosynthesis; thiamine diphosphate biosynthesis. Catalyzes the ATP-dependent transfer of a sulfur to tRNA to produce 4-thiouridine in position 8 of tRNAs, which functions as a near-UV photosensor. Also catalyzes the transfer of sulfur to the sulfur carrier protein ThiS, forming ThiS-thiocarboxylate. This is a step in the synthesis of thiazole, in the thiamine biosynthesis pathway. The sulfur is donated as persulfide by IscS. The sequence is that of Probable tRNA sulfurtransferase from Mycoplasmopsis pulmonis (strain UAB CTIP) (Mycoplasma pulmonis).